A 1001-amino-acid chain; its full sequence is O-GlcNAcase NagJ (1001 aa).

Residues 1 to 30 form the signal peptide; sequence MKRKMLKRLLTSAFACMFIANGLITTTVRA. Residues 179 to 469 form a catalytic domain region; that stretch reads VSARGIVEGF…WNRAIDMLYG (291 aa). One can recognise a GH84 domain in the interval 180 to 452; sequence SARGIVEGFY…TAADYSWNMD (273 aa). A protein is bound by residues Gly-187, Lys-218, and Asp-297. The active-site Proton donor is the Asp-298. A protein is bound by residues Tyr-335, 394-396, Asp-401, and Asn-429; that span reads WWN. 2 coiled-coil regions span residues 515–543 and 573–597; these read KEDA…KANL and VAQL…LNTA. Residues 916-1001 enclose the Fibronectin type-III domain; the sequence is PVRDFKASEI…KESLTLRTAR (86 aa).

This sequence belongs to the glycosyl hydrolase 84 family.

It carries out the reaction 3-O-(N-acetyl-beta-D-glucosaminyl)-L-seryl-[protein] + H2O = N-acetyl-D-glucosamine + L-seryl-[protein]. The enzyme catalyses 3-O-(N-acetyl-beta-D-glucosaminyl)-L-threonyl-[protein] + H2O = L-threonyl-[protein] + N-acetyl-D-glucosamine. Inhibited by O-(2-acetamido-2-deoxy-D-glucopyranosylidene)amino-N-phenyl-carbamate (PUGNAc) and streptozotocin. Its function is as follows. Binds carbohydrates. Capable of hydrolyzing the glycosidic link of O-GlcNAcylated proteins. Can bind and deglycosylate O-glycosylated peptides from mammals. This Clostridium perfringens (strain ATCC 13124 / DSM 756 / JCM 1290 / NCIMB 6125 / NCTC 8237 / Type A) protein is O-GlcNAcase NagJ (nagJ).